We begin with the raw amino-acid sequence, 309 residues long: Olfactory receptor 5H2 (309 aa).

Topologically, residues 1–28 (MEQDNTTLLTEFVLTGLTYQPEWKMPLF) are extracellular. A glycan (N-linked (GlcNAc...) asparagine) is linked at N5. Residues 29-49 (LVFLVIYLITIVWNLGLIALI) form a helical membrane-spanning segment. Topologically, residues 50 to 56 (WNDPQLH) are cytoplasmic. A helical membrane pass occupies residues 57-77 (IPMYFFLGSLAFVDAWISSTV). Over 78–97 (TPKMLVNFLAKNRMISLSEC) the chain is Extracellular. Residues C97 and C179 are joined by a disulfide bond. The chain crosses the membrane as a helical span at residues 98–118 (MIQFFSFAFGGTTECFLLATM). Over 119-143 (AYDRYVAICKPLLYPVIMNNSLCIR) the chain is Cytoplasmic. The chain crosses the membrane as a helical span at residues 144–164 (LLAFSFLGGFLHALIHEVLIF). At 165 to 193 (RLTFCNSNIIHHFYCDIIPLFMISCTDPS) the chain is on the extracellular side. The helical transmembrane segment at 194–214 (INFLMVFILSGSIQVFTIVTV) threads the bilayer. Residues 215 to 239 (LNSYTFALFTILKKKSVRGVRKAFS) lie on the Cytoplasmic side of the membrane. Residues 240–260 (TCGAHLLSVSLYYGPLIFMYL) form a helical membrane-spanning segment. The Extracellular portion of the chain corresponds to 261-271 (RPASPQADDQD). Residues 272-292 (MIDSVFYTIIIPLLNPIIYSL) form a helical membrane-spanning segment. Residues 293–309 (RNKQVIDSFTKMVKRNV) are Cytoplasmic-facing.

It belongs to the G-protein coupled receptor 1 family.

The protein localises to the cell membrane. Odorant receptor. The sequence is that of Olfactory receptor 5H2 (OR5H2) from Homo sapiens (Human).